The chain runs to 581 residues: 2-succinyl-5-enolpyruvyl-6-hydroxy-3-cyclohexene-1-carboxylate synthase (581 aa).

The protein belongs to the TPP enzyme family. MenD subfamily. In terms of assembly, homodimer. Requires Mg(2+) as cofactor. Mn(2+) serves as cofactor. It depends on thiamine diphosphate as a cofactor.

It catalyses the reaction isochorismate + 2-oxoglutarate + H(+) = 5-enolpyruvoyl-6-hydroxy-2-succinyl-cyclohex-3-ene-1-carboxylate + CO2. Its pathway is quinol/quinone metabolism; 1,4-dihydroxy-2-naphthoate biosynthesis; 1,4-dihydroxy-2-naphthoate from chorismate: step 2/7. It functions in the pathway cofactor biosynthesis; phylloquinone biosynthesis. Catalyzes the thiamine diphosphate-dependent decarboxylation of 2-oxoglutarate and the subsequent addition of the resulting succinic semialdehyde-thiamine pyrophosphate anion to isochorismate to yield 2-succinyl-5-enolpyruvyl-6-hydroxy-3-cyclohexene-1-carboxylate (SEPHCHC). The protein is 2-succinyl-5-enolpyruvyl-6-hydroxy-3-cyclohexene-1-carboxylate synthase of Gloeothece citriformis (strain PCC 7424) (Cyanothece sp. (strain PCC 7424)).